Reading from the N-terminus, the 374-residue chain is tRNA-specific 2-thiouridylase MnmA (374 aa).

ATP is bound by residues G12–S19 and M38. The tract at residues N98–D100 is interaction with target base in tRNA. The Nucleophile role is filled by C103. A disulfide bond links C103 and C202. G128 lines the ATP pocket. Residues K152–Q154 form an interaction with tRNA region. Catalysis depends on C202, which acts as the Cysteine persulfide intermediate. Positions R316 to Y317 are interaction with tRNA.

The protein belongs to the MnmA/TRMU family.

It is found in the cytoplasm. It catalyses the reaction S-sulfanyl-L-cysteinyl-[protein] + uridine(34) in tRNA + AH2 + ATP = 2-thiouridine(34) in tRNA + L-cysteinyl-[protein] + A + AMP + diphosphate + H(+). Functionally, catalyzes the 2-thiolation of uridine at the wobble position (U34) of tRNA, leading to the formation of s(2)U34. The polypeptide is tRNA-specific 2-thiouridylase MnmA (Vibrio campbellii (strain ATCC BAA-1116)).